A 253-amino-acid polypeptide reads, in one-letter code: Hydroxypyruvate/pyruvate aldolase (253 aa).

The Proton acceptor role is filled by histidine 48. Residues glutamate 151 and aspartate 177 each contribute to the a divalent metal cation site.

The protein belongs to the HpcH/HpaI aldolase family. It depends on a divalent metal cation as a cofactor.

The enzyme catalyses D-glyceraldehyde + pyruvate = 2-dehydro-3-deoxy-L-galactonate. In terms of biological role, aldolase which can catalyze in vitro the aldolisation reaction between hydroxypyruvate (HPA) or pyruvate (PA) and D-glyceraldehyde (D-GA). The condensation of pyruvate and D-glyceraldehyde produces 2-dehydro-3-deoxy-L-galactonate. Has weak activity with hydroxypyruvate and D-glyceraldehyde. This chain is Hydroxypyruvate/pyruvate aldolase, found in Sagittula stellata (strain ATCC 700073 / DSM 11524 / E-37).